A 208-amino-acid chain; its full sequence is Uracil phosphoribosyltransferase (208 aa).

5-phospho-alpha-D-ribose 1-diphosphate-binding positions include Arg78, Arg103, and Asp130–Ser138. Residues Ile193 and Gly198–Ala200 each bind uracil. Residue Asp199 participates in 5-phospho-alpha-D-ribose 1-diphosphate binding.

The protein belongs to the UPRTase family. It depends on Mg(2+) as a cofactor.

It carries out the reaction UMP + diphosphate = 5-phospho-alpha-D-ribose 1-diphosphate + uracil. It participates in pyrimidine metabolism; UMP biosynthesis via salvage pathway; UMP from uracil: step 1/1. With respect to regulation, allosterically activated by GTP. Functionally, catalyzes the conversion of uracil and 5-phospho-alpha-D-ribose 1-diphosphate (PRPP) to UMP and diphosphate. In Pectobacterium carotovorum subsp. carotovorum (strain PC1), this protein is Uracil phosphoribosyltransferase.